Here is a 381-residue protein sequence, read N- to C-terminus: UDP-4-amino-4-deoxy-L-arabinose--oxoglutarate aminotransferase (381 aa).

An N6-(pyridoxal phosphate)lysine modification is found at K182.

Belongs to the DegT/DnrJ/EryC1 family. ArnB subfamily. In terms of assembly, homodimer. It depends on pyridoxal 5'-phosphate as a cofactor.

The enzyme catalyses UDP-4-amino-4-deoxy-beta-L-arabinose + 2-oxoglutarate = UDP-beta-L-threo-pentopyranos-4-ulose + L-glutamate. It participates in nucleotide-sugar biosynthesis; UDP-4-deoxy-4-formamido-beta-L-arabinose biosynthesis; UDP-4-deoxy-4-formamido-beta-L-arabinose from UDP-alpha-D-glucuronate: step 2/3. It functions in the pathway bacterial outer membrane biogenesis; lipopolysaccharide biosynthesis. Functionally, catalyzes the conversion of UDP-4-keto-arabinose (UDP-Ara4O) to UDP-4-amino-4-deoxy-L-arabinose (UDP-L-Ara4N). The modified arabinose is attached to lipid A and is required for resistance to polymyxin and cationic antimicrobial peptides. The chain is UDP-4-amino-4-deoxy-L-arabinose--oxoglutarate aminotransferase from Photorhabdus laumondii subsp. laumondii (strain DSM 15139 / CIP 105565 / TT01) (Photorhabdus luminescens subsp. laumondii).